A 255-amino-acid chain; its full sequence is MIQISALPAFTDNYIWLLQDPHTQRCAVVDPGDAAPVLDWLEQNPGWALSDILVTHHHHDHVGGVEQLKGATNAKVYGPANEKIPARDVALNDNDRITVLGWDFDIYTVPGHTLGHITFYHSGVLLCGDTLFAAGCGRLFEGTPEQMYTSLERLAALPADTRVYCTHEYTQSNLKFAQAVEPDNADIAERVESVRQLRARGEITLPSNLALERLTNPFLRTSETSVKQKADERNGRDNRSGAEVFASLRAWKDKF.

His-56, His-58, Asp-60, His-61, His-112, Asp-129, and His-167 together coordinate Zn(2+).

The protein belongs to the metallo-beta-lactamase superfamily. Glyoxalase II family. Monomer. It depends on Zn(2+) as a cofactor.

It carries out the reaction an S-(2-hydroxyacyl)glutathione + H2O = a 2-hydroxy carboxylate + glutathione + H(+). The protein operates within secondary metabolite metabolism; methylglyoxal degradation; (R)-lactate from methylglyoxal: step 2/2. In terms of biological role, thiolesterase that catalyzes the hydrolysis of S-D-lactoyl-glutathione to form glutathione and D-lactic acid. The protein is Hydroxyacylglutathione hydrolase of Pseudomonas fluorescens (strain SBW25).